The following is a 124-amino-acid chain: MRHYEIVFMVHPDQSEQVPAMIERYTASVTEAGGQVHRLEDWGRRQLAYPINKLHKAHYVLMNVEAPKSVIDELETNFRYNDAVLRNLIVHTKAAVKEASLMAKAKESKTTEVVAEVESKEASE.

It belongs to the bacterial ribosomal protein bS6 family.

In terms of biological role, binds together with bS18 to 16S ribosomal RNA. This Haemophilus ducreyi (strain 35000HP / ATCC 700724) protein is Small ribosomal subunit protein bS6.